Reading from the N-terminus, the 433-residue chain is Protein translocase subunit SecD (433 aa).

6 helical membrane-spanning segments follow: residues Leu-7–Ile-27, Leu-257–Met-277, Ala-278–Ala-298, Leu-300–Val-320, Thr-354–Gly-374, and Gly-380–Ala-400.

The protein belongs to the SecD/SecF family. SecD subfamily. As to quaternary structure, forms a complex with SecF. Part of the essential Sec protein translocation apparatus which comprises SecA, SecYEG and auxiliary proteins SecDF. Other proteins may also be involved.

It localises to the cell membrane. Its function is as follows. Part of the Sec protein translocase complex. Interacts with the SecYEG preprotein conducting channel. SecDF uses the proton motive force (PMF) to complete protein translocation after the ATP-dependent function of SecA. The chain is Protein translocase subunit SecD from Alicyclobacillus acidocaldarius subsp. acidocaldarius (strain ATCC 27009 / DSM 446 / BCRC 14685 / JCM 5260 / KCTC 1825 / NBRC 15652 / NCIMB 11725 / NRRL B-14509 / 104-IA) (Bacillus acidocaldarius).